Consider the following 257-residue polypeptide: UPF0246 protein KPK_4750 (257 aa).

The protein belongs to the UPF0246 family.

This is UPF0246 protein KPK_4750 from Klebsiella pneumoniae (strain 342).